Reading from the N-terminus, the 289-residue chain is 4-hydroxy-tetrahydrodipicolinate synthase (289 aa).

Thr43 contributes to the pyruvate binding site. Tyr131 acts as the Proton donor/acceptor in catalysis. Lys160 acts as the Schiff-base intermediate with substrate in catalysis. A pyruvate-binding site is contributed by Val200.

It belongs to the DapA family. Homotetramer; dimer of dimers.

The protein resides in the cytoplasm. It catalyses the reaction L-aspartate 4-semialdehyde + pyruvate = (2S,4S)-4-hydroxy-2,3,4,5-tetrahydrodipicolinate + H2O + H(+). It participates in amino-acid biosynthesis; L-lysine biosynthesis via DAP pathway; (S)-tetrahydrodipicolinate from L-aspartate: step 3/4. Catalyzes the condensation of (S)-aspartate-beta-semialdehyde [(S)-ASA] and pyruvate to 4-hydroxy-tetrahydrodipicolinate (HTPA). The chain is 4-hydroxy-tetrahydrodipicolinate synthase from Methanococcus maripaludis (strain C6 / ATCC BAA-1332).